The following is a 569-amino-acid chain: Acyl-CoA-binding domain-containing protein 5 (569 aa).

A signal peptide spans 1–31 (MELFYELLLTAAASLLVAFLLARLLASAATA). An ACB domain is found at 415–506 (IEKRFGVAAA…LSEAIPGWMG (92 aa)). Residues lysine 474 and tyrosine 493 each contribute to the an acyl-CoA site. The N-linked (GlcNAc...) asparagine glycan is linked to asparagine 508. 2 stretches are compositionally biased toward polar residues: residues 533 to 544 (INQHDSQGNEDN) and 552 to 569 (LTSSPNPEKGQSSDIPAE). Residues 533–569 (INQHDSQGNEDNTGMYEGHLTSSPNPEKGQSSDIPAE) form a disordered region.

This sequence belongs to the ACBP family. As to expression, highly expressed in seeds and leaves. Expressed at low levels in roots.

Its subcellular location is the endoplasmic reticulum. Functionally, binds medium- and long-chain acyl-CoA esters with high affinity. Can interact in vitro with palmitoyl-CoA and linolenoyl-CoA. Binds phosphatidic acid (PA) and phosphatidylcholine (PC) in vitro. May play a role in the biosynthesis of phospholipids. In Oryza sativa subsp. japonica (Rice), this protein is Acyl-CoA-binding domain-containing protein 5.